The chain runs to 486 residues: GTPase Obg (486 aa).

In terms of domain architecture, Obg spans serine 2–valine 159. Residues alanine 160–alanine 340 form the OBG-type G domain. GTP-binding positions include glycine 166–serine 173, phenylalanine 191–valine 195, aspartate 212–glycine 215, asparagine 292–aspartate 295, and serine 321–valine 323. Residues serine 173 and threonine 193 each coordinate Mg(2+). The region spanning proline 358 to proline 438 is the OCT domain. Positions arginine 462–glutamine 486 are disordered.

It belongs to the TRAFAC class OBG-HflX-like GTPase superfamily. OBG GTPase family. Monomer. Mg(2+) serves as cofactor.

The protein localises to the cytoplasm. In terms of biological role, an essential GTPase which binds GTP, GDP and possibly (p)ppGpp with moderate affinity, with high nucleotide exchange rates and a fairly low GTP hydrolysis rate. Plays a role in control of the cell cycle, stress response, ribosome biogenesis and in those bacteria that undergo differentiation, in morphogenesis control. This Rhodococcus jostii (strain RHA1) protein is GTPase Obg.